The chain runs to 209 residues: UPF0319 protein VFMJ11_1730 (209 aa).

The first 21 residues, 1-21 (MKIQSIFAASFCLLSSISAHA), serve as a signal peptide directing secretion.

The protein belongs to the UPF0319 family.

The sequence is that of UPF0319 protein VFMJ11_1730 from Aliivibrio fischeri (strain MJ11) (Vibrio fischeri).